Reading from the N-terminus, the 192-residue chain is UPF0301 protein Bphyt_0868 (192 aa).

It belongs to the UPF0301 (AlgH) family.

This Paraburkholderia phytofirmans (strain DSM 17436 / LMG 22146 / PsJN) (Burkholderia phytofirmans) protein is UPF0301 protein Bphyt_0868.